A 661-amino-acid polypeptide reads, in one-letter code: DNA ligase (661 aa).

NAD(+)-binding positions include 31-35 (DKEYD), 79-80 (SL), and E112. K114 functions as the N6-AMP-lysine intermediate in the catalytic mechanism. 4 residues coordinate NAD(+): R135, E169, K281, and K305. The Zn(2+) site is built by C398, C401, C414, and C420. In terms of domain architecture, BRCT spans 578–661 (QQENIFLGKT…ISEAEFEAML (84 aa)).

It belongs to the NAD-dependent DNA ligase family. LigA subfamily. Requires Mg(2+) as cofactor. Mn(2+) serves as cofactor.

It carries out the reaction NAD(+) + (deoxyribonucleotide)n-3'-hydroxyl + 5'-phospho-(deoxyribonucleotide)m = (deoxyribonucleotide)n+m + AMP + beta-nicotinamide D-nucleotide.. DNA ligase that catalyzes the formation of phosphodiester linkages between 5'-phosphoryl and 3'-hydroxyl groups in double-stranded DNA using NAD as a coenzyme and as the energy source for the reaction. It is essential for DNA replication and repair of damaged DNA. This chain is DNA ligase, found in Alkaliphilus oremlandii (strain OhILAs) (Clostridium oremlandii (strain OhILAs)).